The primary structure comprises 855 residues: DNA replication helicase (855 aa).

78 to 85 (GNAGSGKS) lines the ATP pocket.

It belongs to the herpesviridae helicase family. Associates with the primase and the primase-associated factor to form the helicase-primase complex.

The protein resides in the host nucleus. Component of the helicase/primase complex. Unwinds the DNA at the replication forks and generates single-stranded DNA for both leading and lagging strand synthesis. The primase synthesizes short RNA primers on the lagging strand that the polymerase elongates using dNTPs. Possesses helicase-like motifs and therefore may act as the helicase subunit of the complex. In Amazona oratrix (yellow-headed parrot), this protein is DNA replication helicase.